The following is a 132-amino-acid chain: Small ribosomal subunit protein uS8 (132 aa).

It belongs to the universal ribosomal protein uS8 family. Part of the 30S ribosomal subunit. Contacts proteins S5 and S12.

Its function is as follows. One of the primary rRNA binding proteins, it binds directly to 16S rRNA central domain where it helps coordinate assembly of the platform of the 30S subunit. This Baumannia cicadellinicola subsp. Homalodisca coagulata protein is Small ribosomal subunit protein uS8.